Consider the following 722-residue polypeptide: Pesticidal crystal protein Cry22Aa (722 aa).

Promotes colloidosmotic lysis by binding to the midgut epithelial cells of hymenopteran species. In Bacillus thuringiensis, this protein is Pesticidal crystal protein Cry22Aa (cry22Aa).